The sequence spans 199 residues: GTP-binding protein Di-Ras2 (199 aa).

GTP-binding positions include 14–21, 33–39, 61–65, and 121–124; these read GAGGVGKS, RESYIPT, DTTGS, and NKCD. Position 35 is a phosphoserine (serine 35). Residues 36 to 44 carry the Effector region motif; the sequence is YIPTVEDTY. Serine 126 is subject to Phosphoserine. 152–153 serves as a coordination point for GTP; that stretch reads AK. Cysteine 196 is subject to Cysteine methyl ester. Residue cysteine 196 is the site of S-geranylgeranyl cysteine attachment. The propeptide at 197 to 199 is removed in mature form; it reads VIM.

This sequence belongs to the small GTPase superfamily. Di-Ras family. Ubiquitinated by the ECS(ASB11) complex via 'Lys-11'-linked ubiquitin chains, leading to its degradation by the proteasome.

It localises to the cell membrane. It catalyses the reaction GTP + H2O = GDP + phosphate + H(+). Displays low GTPase activity and exists predominantly in the GTP-bound form. This Macaca fascicularis (Crab-eating macaque) protein is GTP-binding protein Di-Ras2 (DIRAS2).